We begin with the raw amino-acid sequence, 285 residues long: Polyamine aminopropyltransferase (285 aa).

Positions 5-241 (DNWYIEHFQP…GWWSVTMASK (237 aa)) constitute a PABS domain. Gln-35 is a binding site for S-methyl-5'-thioadenosine. 2 residues coordinate spermidine: His-66 and Asp-90. S-methyl-5'-thioadenosine contacts are provided by residues Asp-110 and 141–142 (DG). Asp-160 (proton acceptor) is an active-site residue. 160-163 (DSTD) is a spermidine binding site. Pro-167 is a binding site for S-methyl-5'-thioadenosine.

The protein belongs to the spermidine/spermine synthase family. In terms of assembly, homodimer or homotetramer.

It is found in the cytoplasm. The enzyme catalyses S-adenosyl 3-(methylsulfanyl)propylamine + putrescine = S-methyl-5'-thioadenosine + spermidine + H(+). Its pathway is amine and polyamine biosynthesis; spermidine biosynthesis; spermidine from putrescine: step 1/1. Its function is as follows. Catalyzes the irreversible transfer of a propylamine group from the amino donor S-adenosylmethioninamine (decarboxy-AdoMet) to putrescine (1,4-diaminobutane) to yield spermidine. The protein is Polyamine aminopropyltransferase of Xanthomonas euvesicatoria pv. vesicatoria (strain 85-10) (Xanthomonas campestris pv. vesicatoria).